Reading from the N-terminus, the 826-residue chain is Arsenite oxidase subunit AioA (826 aa).

Residues Cys-22, Cys-25, and Cys-29 each contribute to the [3Fe-4S] cluster site. Substrate contacts are provided by His-196, Glu-204, Arg-420, and His-424.

It belongs to the prokaryotic molybdopterin-containing oxidoreductase family. Heterodimer consisting of a large and a small subunit. [3Fe-4S] cluster serves as cofactor. The cofactor is Mo-bis(molybdopterin guanine dinucleotide).

It catalyses the reaction 2 oxidized [azurin] + arsenite + H2O = 2 reduced [azurin] + arsenate + 3 H(+). Its function is as follows. Involved in the detoxification of arsenic. Oxidizes As(III)O3(3-) (arsenite) to the somewhat less toxic As(V)O4(3-) (arsenate). This chain is Arsenite oxidase subunit AioA (aioA), found in Alcaligenes faecalis.